A 125-amino-acid polypeptide reads, in one-letter code: Large ribosomal subunit protein bL21 (125 aa).

It belongs to the bacterial ribosomal protein bL21 family. As to quaternary structure, part of the 50S ribosomal subunit. Contacts protein L20.

This protein binds to 23S rRNA in the presence of protein L20. The polypeptide is Large ribosomal subunit protein bL21 (Synechococcus sp. (strain CC9902)).